Here is a 331-residue protein sequence, read N- to C-terminus: Hyaluronidase (331 aa).

Intrachain disulfides connect C19-C308 and C185-C197. An N-linked (GlcNAc...) asparagine glycan is attached at N79. The active-site Proton donor is the E109. A glycan (N-linked (GlcNAc...) asparagine) is linked at N325.

Belongs to the glycosyl hydrolase 56 family. As to expression, expressed by the venom gland.

The protein resides in the secreted. The enzyme catalyses Random hydrolysis of (1-&gt;4)-linkages between N-acetyl-beta-D-glucosamine and D-glucuronate residues in hyaluronate.. Functionally, hydrolyzes high molecular weight hyaluronic acid to produce small oligosaccharides. The protein is Hyaluronidase of Dolichovespula maculata (Bald-faced hornet).